The following is a 241-amino-acid chain: MPTLGVNIDHIATIRQARRTVEPDPVAAAVLAELAGADGITVHLREDRRHIQDRDVRILRQTVRSHLNLEMAATEEMLAIALDIKPDYVTLVPEKREEVTTEGGLDIIGQIARIGEIVDKLQSASIPVSLFIDAEPAQIEASVKVQAQFIELHTGQYAEAKDETNRHRELAILAKGCQQAIQAGLRVNAGHGLTYWNVYPVAALPGMEELNIGHTIISRAALVGIERAVREMKQAIRGNGA.

N7 lines the 3-amino-2-oxopropyl phosphate pocket. 9 to 10 is a 1-deoxy-D-xylulose 5-phosphate binding site; sequence DH. R18 contributes to the 3-amino-2-oxopropyl phosphate binding site. H43 (proton acceptor) is an active-site residue. Residues R45 and H50 each contribute to the 1-deoxy-D-xylulose 5-phosphate site. E70 acts as the Proton acceptor in catalysis. 1-deoxy-D-xylulose 5-phosphate is bound at residue T100. The Proton donor role is filled by H191. 3-amino-2-oxopropyl phosphate-binding positions include G192 and 213–214; that span reads GH.

This sequence belongs to the PNP synthase family. As to quaternary structure, homooctamer; tetramer of dimers.

The protein localises to the cytoplasm. The enzyme catalyses 3-amino-2-oxopropyl phosphate + 1-deoxy-D-xylulose 5-phosphate = pyridoxine 5'-phosphate + phosphate + 2 H2O + H(+). Its pathway is cofactor biosynthesis; pyridoxine 5'-phosphate biosynthesis; pyridoxine 5'-phosphate from D-erythrose 4-phosphate: step 5/5. Catalyzes the complicated ring closure reaction between the two acyclic compounds 1-deoxy-D-xylulose-5-phosphate (DXP) and 3-amino-2-oxopropyl phosphate (1-amino-acetone-3-phosphate or AAP) to form pyridoxine 5'-phosphate (PNP) and inorganic phosphate. The protein is Pyridoxine 5'-phosphate synthase of Nostoc punctiforme (strain ATCC 29133 / PCC 73102).